The primary structure comprises 333 residues: PDZ domain-containing protein GIPC1 (333 aa).

The segment covering 1 to 11 (MPLGLGRRKKA) has biased composition (basic residues). The segment at 1-53 (MPLGLGRRKKAPPLVENEEAEPSRSGLGVGEPGPLGGSAAGESQMGLPPPPAA) is disordered. The segment covering 27–39 (LGVGEPGPLGGSA) has biased composition (gly residues). The residue at position 68 (Ser-68) is a Phosphoserine. Positions 133 to 213 (EVEVFKSEEA…GRTFTLKLTE (81 aa)) constitute a PDZ domain. Phosphoserine occurs at positions 222, 225, and 232. The segment at 223 to 244 (QRSAGGHPGSGPQLGTGRGTLR) is disordered. Positions 228-240 (GHPGSGPQLGTGR) are enriched in gly residues. Thr-242 bears the Phosphothreonine mark. The residue at position 247 (Ser-247) is a Phosphoserine.

This sequence belongs to the GIPC family. As to quaternary structure, interacts with GLUT1 (C-terminus), ACTN1, KIF1B, MYO6 and PLEKHG5. Interacts with RGS19 C-terminus. Interacts with SDC4/syndecan-4 and SEMA4C/semaphorin-4C. Widely expressed.

The protein localises to the cytoplasm. The protein resides in the membrane. Inhibits endothelial cell migration (in vitro). May be involved in G protein-linked signaling. This is PDZ domain-containing protein GIPC1 (Gipc1) from Mus musculus (Mouse).